The primary structure comprises 517 residues: tRNA (guanine-N(7)-)-methyltransferase non-catalytic subunit trm82 (517 aa).

The interval 40 to 117 (WKSPVPESMS…TKNSSPKILE (78 aa)) is disordered. The span at 52 to 64 (KTTEEETQTKNED) shows a compositional bias: basic and acidic residues. WD repeat units lie at residues 116-158 (LEPS…GLRQ), 260-301 (GHVS…HIIE), and 306-346 (GHIE…LLSK).

The protein belongs to the WD repeat TRM82 family. In terms of assembly, forms a heterodimer with the catalytic subunit trm8.

It localises to the nucleus. Its pathway is tRNA modification; N(7)-methylguanine-tRNA biosynthesis. Functionally, required for the formation of N(7)-methylguanine at position 46 (m7G46) in tRNA. In the complex, it is required to stabilize and induce conformational changes of the catalytic subunit. The protein is tRNA (guanine-N(7)-)-methyltransferase non-catalytic subunit trm82 (trm82) of Sclerotinia sclerotiorum (strain ATCC 18683 / 1980 / Ss-1) (White mold).